The sequence spans 111 residues: Probable monothiol glutaredoxin 2 (111 aa).

The Glutaredoxin domain occupies 7–109; that stretch reads LKFIQNAIKK…KMLKDETKLI (103 aa). Lys-24 lines the glutathione pocket. Cys-32 is a [2Fe-2S] cluster binding site. Residues Arg-61, Phe-73, and 86–87 contribute to the glutathione site; that span reads CD.

The protein belongs to the glutaredoxin family. Monothiol subfamily.

The sequence is that of Probable monothiol glutaredoxin 2 (grxC2) from Rickettsia typhi (strain ATCC VR-144 / Wilmington).